Reading from the N-terminus, the 232-residue chain is Large ribosomal subunit protein uL1 (232 aa).

This sequence belongs to the universal ribosomal protein uL1 family. As to quaternary structure, part of the 50S ribosomal subunit.

Binds directly to 23S rRNA. The L1 stalk is quite mobile in the ribosome, and is involved in E site tRNA release. In terms of biological role, protein L1 is also a translational repressor protein, it controls the translation of the L11 operon by binding to its mRNA. The sequence is that of Large ribosomal subunit protein uL1 from Paraburkholderia xenovorans (strain LB400).